Consider the following 465-residue polypeptide: Alpha-galacturonidase (465 aa).

11 to 78 is a binding site for NAD(+); sequence ITIAYIGGGS…GKWLYKACET (68 aa). Residue Asn-157 coordinates substrate. Cys-179 contacts Mn(2+). His-180 functions as the Proton donor in the catalytic mechanism. Mn(2+) is bound at residue His-216.

Belongs to the glycosyl hydrolase 4 family. Homotetramer. The cofactor is NAD(+). Mn(2+) serves as cofactor.

The catalysed reaction is [(1-&gt;4)-alpha-D-galacturonosyl](n) + H2O = alpha-D-galacturonate + [(1-&gt;4)-alpha-D-galacturonosyl](n-1). Functionally, alpha-galacturonidase able to catalyze the hydrolysis of the chromogenic substrate p-nitrophenyl-alpha-D-galacturonic acid (pNPalphaGalUA). It is probable that alpha-1,4-di-galacturonate (GalUA(2)) is the naturally occurring substrate. This chain is Alpha-galacturonidase, found in Thermoanaerobacterium saccharolyticum (strain DSM 8691 / JW/SL-YS485).